A 404-amino-acid polypeptide reads, in one-letter code: Tryptophan synthase beta chain (404 aa).

At Lys98 the chain carries N6-(pyridoxal phosphate)lysine.

It belongs to the TrpB family. As to quaternary structure, tetramer of two alpha and two beta chains. It depends on pyridoxal 5'-phosphate as a cofactor.

The catalysed reaction is (1S,2R)-1-C-(indol-3-yl)glycerol 3-phosphate + L-serine = D-glyceraldehyde 3-phosphate + L-tryptophan + H2O. It participates in amino-acid biosynthesis; L-tryptophan biosynthesis; L-tryptophan from chorismate: step 5/5. Functionally, the beta subunit is responsible for the synthesis of L-tryptophan from indole and L-serine. The polypeptide is Tryptophan synthase beta chain (trpB) (Methanocaldococcus jannaschii (strain ATCC 43067 / DSM 2661 / JAL-1 / JCM 10045 / NBRC 100440) (Methanococcus jannaschii)).